The primary structure comprises 409 residues: Probable aspartate/prephenate aminotransferase (409 aa).

L-aspartate is bound by residues G39, W125, and N175. Residue K239 is modified to N6-(pyridoxal phosphate)lysine. R375 contributes to the L-aspartate binding site.

This sequence belongs to the class-I pyridoxal-phosphate-dependent aminotransferase family. In terms of assembly, homodimer. It depends on pyridoxal 5'-phosphate as a cofactor.

The protein resides in the cytoplasm. It catalyses the reaction L-aspartate + 2-oxoglutarate = oxaloacetate + L-glutamate. The enzyme catalyses L-arogenate + 2-oxoglutarate = prephenate + L-glutamate. Functionally, catalyzes the reversible conversion of aspartate and 2-oxoglutarate to glutamate and oxaloacetate. Can also transaminate prephenate in the presence of glutamate. This Rickettsia felis (strain ATCC VR-1525 / URRWXCal2) (Rickettsia azadi) protein is Probable aspartate/prephenate aminotransferase (aatA).